A 203-amino-acid polypeptide reads, in one-letter code: Small ribosomal subunit protein uS4 (203 aa).

The S4 RNA-binding domain maps to Thr92 to Pro164.

This sequence belongs to the universal ribosomal protein uS4 family. In terms of assembly, part of the 30S ribosomal subunit. Contacts protein S5. The interaction surface between S4 and S5 is involved in control of translational fidelity.

In terms of biological role, one of the primary rRNA binding proteins, it binds directly to 16S rRNA where it nucleates assembly of the body of the 30S subunit. Functionally, with S5 and S12 plays an important role in translational accuracy. This is Small ribosomal subunit protein uS4 from Opitutus terrae (strain DSM 11246 / JCM 15787 / PB90-1).